Here is a 653-residue protein sequence, read N- to C-terminus: tRNA uridine 5-carboxymethylaminomethyl modification enzyme MnmG (653 aa).

Residues 18–23 (GAGHAG), Val130, and Thr195 contribute to the FAD site. NAD(+) is bound at residue 287–301 (GPRYCPSIEDKVVRF). Gln384 contacts FAD. The segment at 624 to 653 (SQTKSSASVDKRASSDNESSRPTSSASDSL) is disordered. A compositionally biased stretch (basic and acidic residues) spans 632–642 (VDKRASSDNES). Positions 643-653 (SRPTSSASDSL) are enriched in polar residues.

Belongs to the MnmG family. Homodimer. Heterotetramer of two MnmE and two MnmG subunits. FAD serves as cofactor.

The protein localises to the cytoplasm. Functionally, NAD-binding protein involved in the addition of a carboxymethylaminomethyl (cmnm) group at the wobble position (U34) of certain tRNAs, forming tRNA-cmnm(5)s(2)U34. The protein is tRNA uridine 5-carboxymethylaminomethyl modification enzyme MnmG of Rhodopirellula baltica (strain DSM 10527 / NCIMB 13988 / SH1).